The chain runs to 334 residues: Probable prephenate dehydratase (334 aa).

One can recognise a Prephenate dehydratase domain in the interval Arg7–Arg224. The region spanning Leu244 to Trp322 is the ACT domain.

It localises to the cytoplasm. It carries out the reaction prephenate + H(+) = 3-phenylpyruvate + CO2 + H2O. It participates in amino-acid biosynthesis; L-phenylalanine biosynthesis; phenylpyruvate from prephenate: step 1/1. Functionally, catayzes the decarboxylation/dehydration of prephenate to phenylpyruvate. This Saccharomyces cerevisiae (strain ATCC 204508 / S288c) (Baker's yeast) protein is Probable prephenate dehydratase (PHA2).